Reading from the N-terminus, the 351-residue chain is Uroporphyrinogen decarboxylase (351 aa).

Substrate is bound by residues 27 to 31 (RQAGR), aspartate 77, tyrosine 154, threonine 209, and histidine 327.

This sequence belongs to the uroporphyrinogen decarboxylase family. In terms of assembly, homodimer.

The protein localises to the cytoplasm. The enzyme catalyses uroporphyrinogen III + 4 H(+) = coproporphyrinogen III + 4 CO2. It participates in porphyrin-containing compound metabolism; protoporphyrin-IX biosynthesis; coproporphyrinogen-III from 5-aminolevulinate: step 4/4. In terms of biological role, catalyzes the decarboxylation of four acetate groups of uroporphyrinogen-III to yield coproporphyrinogen-III. The protein is Uroporphyrinogen decarboxylase of Thioalkalivibrio sulfidiphilus (strain HL-EbGR7).